The primary structure comprises 246 residues: Type III pantothenate kinase (246 aa).

6–13 (DVGNTHSV) is an ATP binding site. 103–106 (GADR) serves as a coordination point for substrate. D105 acts as the Proton acceptor in catalysis. D125 is a binding site for K(+). An ATP-binding site is contributed by T128. Residue T179 participates in substrate binding.

Belongs to the type III pantothenate kinase family. In terms of assembly, homodimer. It depends on NH4(+) as a cofactor. K(+) is required as a cofactor.

It is found in the cytoplasm. It catalyses the reaction (R)-pantothenate + ATP = (R)-4'-phosphopantothenate + ADP + H(+). Its pathway is cofactor biosynthesis; coenzyme A biosynthesis; CoA from (R)-pantothenate: step 1/5. Catalyzes the phosphorylation of pantothenate (Pan), the first step in CoA biosynthesis. The chain is Type III pantothenate kinase from Thermotoga sp. (strain RQ2).